A 1323-amino-acid polypeptide reads, in one-letter code: Glutamate receptor ionotropic, NMDA 2D (1323 aa).

Residues 1 to 27 form the signal peptide; that stretch reads MRGAGGPRGPRGPAKMLLLLALACASP. The Extracellular portion of the chain corresponds to 28–579; it reads FPEEVPGPGA…SPSAFLEPYS (552 aa). Residue Asn-89 is glycosylated (N-linked (GlcNAc...) asparagine). A disulfide bridge links Cys-101 with Cys-345. N-linked (GlcNAc...) asparagine glycosylation is found at Asn-349, Asn-363, Asn-381, and Asn-464. 2 disulfide bridges follow: Cys-452–Cys-480 and Cys-459–Cys-481. L-glutamate-binding residues include Ser-536, Thr-538, and Arg-543. Asn-566 carries an N-linked (GlcNAc...) asparagine glycan. A helical membrane pass occupies residues 580-601; the sequence is PAVWVMMFVMCLTVVAVTVFIF. Residues 602–626 lie on the Cytoplasmic side of the membrane; sequence EYLSPVGYNRSLATGKRPGGSTFTI. The discontinuously helical intramembrane region spans 627–638; it reads GKSIWLLWALVF. Residues 628-647 form a pore-forming region; the sequence is KSIWLLWALVFNNSVPVENP. The Cytoplasmic portion of the chain corresponds to 639-650; that stretch reads NNSVPVENPRGT. The chain crosses the membrane as a helical span at residues 651 to 671; that stretch reads TSKIMVLVWAFFAVIFLASYT. Over 672-840 the chain is Extracellular; sequence ANLAAFMIQE…EVMSSKLDID (169 aa). Residue Asn-712 is glycosylated (N-linked (GlcNAc...) asparagine). Residues Ser-714, Thr-715, and Asp-756 each contribute to the L-glutamate site. Cys-770 and Cys-825 are disulfide-bonded. The helical transmembrane segment at 841-864 threads the bilayer; it reads NMAGVFYMLLVAMGLSLLVFAWEH. Over 865–1323 the chain is Cytoplasmic; it reads LVYWRLRHCL…AHFSSLESEV (459 aa). Disordered regions lie at residues 897–952, 977–1112, and 1201–1323; these read EAAP…PGGA, AAPR…SLGG, and PWAA…ESEV. A compositionally biased stretch (pro residues) spans 899 to 929; that stretch reads APPPAKPPPPPQPLPSPAYPAARPPPGPAPF. The span at 931 to 940 shows a compositional bias: basic and acidic residues; sequence PRERAAADRW. Over residues 977-986 the composition is skewed to low complexity; the sequence is AAPRGAAGRP. The segment covering 987–1001 has biased composition (pro residues); sequence LSPPTTQPPQKPPPS. Residues 1030–1039 are compositionally biased toward low complexity; that stretch reads AAAAAAVGPP. Residues 1080-1092 are compositionally biased toward pro residues; that stretch reads TAPPPRRAAPPPC. Positions 1208 to 1228 are enriched in basic residues; the sequence is PRRRARCGCPRPHPHRPRASH. Arg-1303 carries the omega-N-methylarginine modification. A Phosphoserine modification is found at Ser-1313. Positions 1321–1323 match the PDZ-binding motif; that stretch reads SEV.

This sequence belongs to the glutamate-gated ion channel (TC 1.A.10.1) family. NR2D/GRIN2D subfamily. Heterotetramer. Forms heterotetrameric channels composed of two GluN1/zeta subunits (GRIN1), and two identical GluN2/epsilon subunits (GRIN2A, GRIN2B, GRIN2C or GRIN2D) or GluN3 subunits (GRIN3A or GRIN3B) (in vitro). In vivo, the subunit composition may depend on the expression levels of the different subunits. Interacts with PDZ domains of PATJ and DLG4. Expressed in brain, mainly in the subcortical region.

The protein localises to the cell membrane. It is found in the postsynaptic cell membrane. The enzyme catalyses Ca(2+)(in) = Ca(2+)(out). The catalysed reaction is Na(+)(in) = Na(+)(out). It carries out the reaction K(+)(in) = K(+)(out). Its function is as follows. Component of N-methyl-D-aspartate (NMDA) receptors (NMDARs) that function as heterotetrameric, ligand-gated cation channels with high calcium permeability and voltage-dependent block by Mg(2+). Participates in synaptic plasticity for learning and memory formation. Channel activation requires binding of the neurotransmitter L-glutamate to the GluN2 subunit, glycine or D-serine binding to the GluN1 subunit, plus membrane depolarization to eliminate channel inhibition by Mg(2+). NMDARs mediate simultaneously the potasium efflux and the influx of calcium and sodium. Each GluN2 subunit confers differential attributes to channel properties, including activation, deactivation and desensitization kinetics, pH sensitivity, Ca2(+) permeability, and binding to allosteric modulators. The polypeptide is Glutamate receptor ionotropic, NMDA 2D (Rattus norvegicus (Rat)).